The following is a 364-amino-acid chain: DNA replication and repair protein RecF (364 aa).

30–37 serves as a coordination point for ATP; it reads GDNGAGKT.

Belongs to the RecF family.

It is found in the cytoplasm. Its function is as follows. The RecF protein is involved in DNA metabolism; it is required for DNA replication and normal SOS inducibility. RecF binds preferentially to single-stranded, linear DNA. It also seems to bind ATP. This chain is DNA replication and repair protein RecF, found in Stenotrophomonas maltophilia (strain K279a).